The sequence spans 354 residues: Glutamine synthetase cytosolic isozyme 1-3 (354 aa).

Serine 2 carries the post-translational modification N-acetylserine. Residues serine 2 and serine 48 each carry the phosphoserine modification. The region spanning 19–99 (IIAEYIWIGG…VMCDAYTPAG (81 aa)) is the GS beta-grasp domain. One can recognise a GS catalytic domain in the interval 106–354 (KRHNAAKIFS…SMIAETTILG (249 aa)).

Belongs to the glutamine synthetase family. As to quaternary structure, homooctamer. As to expression, expressed in the pericycle in the region of mature root.

It localises to the cytoplasm. The catalysed reaction is L-glutamate + NH4(+) + ATP = L-glutamine + ADP + phosphate + H(+). Its function is as follows. Low-affinity glutamine synthetase. May contribute to the homeostatic control of glutamine synthesis in roots. The sequence is that of Glutamine synthetase cytosolic isozyme 1-3 (GLN1-3) from Arabidopsis thaliana (Mouse-ear cress).